Consider the following 438-residue polypeptide: Glycerol-3-phosphate acyltransferase 3 (438 aa).

Residues 14 to 34 (WLTLVGGLILLPSAFGLSLGI) form a helical membrane-spanning segment. A phosphoserine mark is found at Ser68 and Ser77. Helical transmembrane passes span 137 to 157 (ISPR…CFLL) and 161 to 181 (VTLA…VGQL). The HXXXXD motif motif lies at 229 to 234 (HTSPID).

This sequence belongs to the 1-acyl-sn-glycerol-3-phosphate acyltransferase family. As to expression, most abundant in epididymal fat, followed by small intestine, brown adipose tissue, kidney, heart and colon.

It localises to the endoplasmic reticulum membrane. The catalysed reaction is sn-glycerol 3-phosphate + an acyl-CoA = a 1-acyl-sn-glycero-3-phosphate + CoA. The enzyme catalyses a 1-acyl-sn-glycero-3-phosphate + an acyl-CoA = a 1,2-diacyl-sn-glycero-3-phosphate + CoA. It catalyses the reaction dodecanoyl-CoA + sn-glycerol 3-phosphate = 1-dodecanoyl-sn-glycerol 3-phosphate + CoA. It carries out the reaction sn-glycerol 3-phosphate + hexadecanoyl-CoA = 1-hexadecanoyl-sn-glycero-3-phosphate + CoA. The catalysed reaction is sn-glycerol 3-phosphate + (9Z)-octadecenoyl-CoA = 1-(9Z-octadecenoyl)-sn-glycero-3-phosphate + CoA. The enzyme catalyses (9Z,12Z)-octadecadienoyl-CoA + sn-glycerol 3-phosphate = 1-(9Z,12Z)-octadecadienoyl-sn-glycero-3-phosphate + CoA. It catalyses the reaction 1-tetradecanoyl-sn-glycerol 3-phosphate + (9Z)-octadecenoyl-CoA = 1-tetradecanoyl-2-(9Z)-octadecenoyl-sn-glycero-3-phosphate + CoA. It carries out the reaction 1-hexadecanoyl-sn-glycero-3-phosphate + (9Z)-octadecenoyl-CoA = 1-hexadecanoyl-2-(9Z-octadecenoyl)-sn-glycero-3-phosphate + CoA. The catalysed reaction is 1-(9Z-octadecenoyl)-sn-glycero-3-phosphate + (9Z)-octadecenoyl-CoA = 1,2-di-(9Z-octadecenoyl)-sn-glycero-3-phosphate + CoA. The enzyme catalyses 1-(6Z,9Z,12Z-octadecatrienoyl)-sn-glycero-3-phosphate + (9Z)-octadecenoyl-CoA = (6Z,9Z,12Z)-octadecatrienoyl-2-(9Z)-octadecenoyl-sn-glycero-3-phosphate + CoA. It catalyses the reaction 1-(9Z,12Z,15Z)-octadecatrienoyl-sn-glycero-3-phosphate + (9Z)-octadecenoyl-CoA = 1-(9Z,12Z,15Z)-octadecatrienoyl-2-(9Z)-octadecenoyl-sn-glycero-3-phosphate + CoA. It carries out the reaction 1-(9Z-octadecenoyl)-sn-glycero-3-phosphate + tetradecanoyl-CoA = 1-(9Z)-octadecenoyl-2-tetradecanoyl-sn-glycero-3-phosphate + CoA. The catalysed reaction is 1-(9Z-octadecenoyl)-sn-glycero-3-phosphate + hexadecanoyl-CoA = 1-(9Z)-octadecenoyl-2-hexadecanoyl-sn-glycero-3-phosphate + CoA. The enzyme catalyses 1-(9Z-octadecenoyl)-sn-glycero-3-phosphate + octadecanoyl-CoA = 1-(9Z-octadecenoyl)-2-octadecanoyl-sn-glycero-3-phosphate + CoA. It catalyses the reaction 1-(9Z-octadecenoyl)-sn-glycero-3-phosphate + (9Z,12Z)-octadecadienoyl-CoA = 1-(9Z)-octadecenoyl-2-(9Z,12Z)-octadecadienoyl-sn-glycero-3-phosphate + CoA. It carries out the reaction 1-(5Z,8Z,11Z,14Z-eicosatetraenoyl)-sn-glycero-3-phosphate + (9Z)-octadecenoyl-CoA = 1-(5Z,8Z,11Z,14Z)-eicosatetraenoyl-2-(9Z)-octadecenoyl-sn-glycero-3-phosphate + CoA. It functions in the pathway glycerolipid metabolism; triacylglycerol biosynthesis. The protein operates within phospholipid metabolism; CDP-diacylglycerol biosynthesis; CDP-diacylglycerol from sn-glycerol 3-phosphate: step 1/3. Its function is as follows. Converts glycerol-3-phosphate to 1-acyl-sn-glycerol-3-phosphate (lysophosphatidic acid or LPA) by incorporating an acyl moiety at the sn-1 position of the glycerol backbone. Also converts LPA into 1,2-diacyl-sn-glycerol-3-phosphate (phosphatidic acid or PA) by incorporating an acyl moiety at the sn-2 position of the glycerol backbone. Protects cells against lipotoxicity. The polypeptide is Glycerol-3-phosphate acyltransferase 3 (Mus musculus (Mouse)).